Consider the following 110-residue polypeptide: Nucleotide-binding protein in fmt 3'region (110 aa).

8 to 15 lines the ATP pocket; the sequence is GLSGAGKT. 57–60 is a binding site for GTP; sequence DARA.

It belongs to the RapZ-like family.

Its function is as follows. Displays ATPase and GTPase activities. This Thermus thermophilus protein is Nucleotide-binding protein in fmt 3'region.